The following is a 337-amino-acid chain: Anthranilate phosphoribosyltransferase (337 aa).

5-phospho-alpha-D-ribose 1-diphosphate-binding positions include Gly80, 83–84, Thr88, 90–93, 108–116, and Ser120; these read GD, NIST, and KHGNRSVSS. Gly80 is an anthranilate binding site. Ser92 contacts Mg(2+). An anthranilate-binding site is contributed by Asn111. An anthranilate-binding site is contributed by Arg166. Asp225 and Glu226 together coordinate Mg(2+).

The protein belongs to the anthranilate phosphoribosyltransferase family. As to quaternary structure, homodimer. The cofactor is Mg(2+).

The enzyme catalyses N-(5-phospho-beta-D-ribosyl)anthranilate + diphosphate = 5-phospho-alpha-D-ribose 1-diphosphate + anthranilate. Its pathway is amino-acid biosynthesis; L-tryptophan biosynthesis; L-tryptophan from chorismate: step 2/5. Functionally, catalyzes the transfer of the phosphoribosyl group of 5-phosphorylribose-1-pyrophosphate (PRPP) to anthranilate to yield N-(5'-phosphoribosyl)-anthranilate (PRA). This chain is Anthranilate phosphoribosyltransferase, found in Syntrophobacter fumaroxidans (strain DSM 10017 / MPOB).